The chain runs to 1074 residues: Probable phospholipid-transporting ATPase tat-5 (1074 aa).

The interval 1 to 26 is disordered; that stretch reads MGKRKKNDESSSSSSQKPCVSSSSDD. A compositionally biased stretch (low complexity) spans 10-26; sequence SSSSSSQKPCVSSSSDD. 4 helical membrane-spanning segments follow: residues 118–138, 143–163, 354–374, and 378–398; these read FVPIVLFQQFKFFLNLYFLLM, FIPAIQIGAPITYWGPLGFVL, LTKLLFCFVLVLSSVMVAMKG, and LWYRYLMRFILLFSYIIPISL. The 4-aspartylphosphate intermediate role is filled by Asp442. Positions 442, 443, 444, 524, 570, 575, 594, 623, 624, 704, 705, 706, 786, and 792 each coordinate ATP. Residue Asp442 participates in Mg(2+) binding. Thr444 is a Mg(2+) binding site. Position 813 (Asp813) interacts with Mg(2+). Residues Asn816 and Asp817 each coordinate ATP. Residue Asp817 participates in Mg(2+) binding. 5 consecutive transmembrane segments (helical) span residues 886 to 906, 954 to 974, 978 to 998, 1006 to 1026, and 1038 to 1058; these read AIFSCVFYFASVSLYQGVLMV, IWVLISLYQGAVIMYGALLVF, FIHVVSISFSALIVTELIMVA, WAMLLAQALSLGLYMISLILF, and WVFISKTTAITAVSCLPLYIV.

The protein belongs to the cation transport ATPase (P-type) (TC 3.A.3) family. Type IV subfamily. The cofactor is Mg(2+).

Its subcellular location is the cell membrane. The enzyme catalyses ATP + H2O + phospholipidSide 1 = ADP + phosphate + phospholipidSide 2.. Its function is as follows. Plays a role in regulating membrane trafficking of cargo proteins during embryogenesis. Regulates snx-3 retromer-mediated endosomal sorting of mig-14, a transporter of Wnt egl-20 morphogen. Together with mon-2 and pad-1, may participate in the formation of endosomal carriers that direct mig-14 trafficking back to Golgi, away from lysosomal degradation. Required for Wnt egl-20 gradient formation along the anteroposterior body axis and migration of QL neuroblast descendants toward the posterior part. Maintains phosphatidylethanolamine (PE) asymmetry at the cell membrane and prevents the budding of ectosome vesicles that affect intercellular communication and morphogenesis. The chain is Probable phospholipid-transporting ATPase tat-5 (tat-5) from Caenorhabditis elegans.